A 66-amino-acid polypeptide reads, in one-letter code: Large ribosomal subunit protein bL32 (66 aa).

The disordered stretch occupies residues 1 to 20 (MAVPKRRKSKSKVRTKRAHH).

The protein belongs to the bacterial ribosomal protein bL32 family.

The chain is Large ribosomal subunit protein bL32 from Leptospira borgpetersenii serovar Hardjo-bovis (strain JB197).